The primary structure comprises 255 residues: Propionicin-F (255 aa).

2 propeptides span residues 1–101 and 145–255; these read MNTK…RVSC and GTPT…DETV.

The protein localises to the secreted. Bacteriocin with specific antibacterial activity against strains of P.freudenreichii. No antibacterial activity was detected against P.acidipropionici, P.jensenii and P.thoenii. The polypeptide is Propionicin-F (Propionibacterium freudenreichii subsp. freudenreichii).